We begin with the raw amino-acid sequence, 354 residues long: Membrane progestin receptor beta (354 aa).

The Cytoplasmic portion of the chain corresponds to 1 to 75 (MTTAILERLS…FFSLFQKHNE (75 aa)). The helical transmembrane segment at 76-96 (VVNVWTHLLAALAVLLRFWAF) threads the bilayer. Topologically, residues 97–111 (AEAEALPWASTHSLP) are extracellular. Residues 112–132 (LLLFILSSITYLTCSLLAHLL) traverse the membrane as a helical segment. The Cytoplasmic portion of the chain corresponds to 133–174 (QSKSELSHYTFYFVDYVGVSVYQYGSALAHFFYSSDQAWYDR). A helical membrane pass occupies residues 175–195 (FWLFFLPAAAFCGWLSCAGCC). Topologically, residues 196–213 (YAKYRYRRPYPVMRKICQ) are extracellular. A helical membrane pass occupies residues 214 to 234 (VVPAGLAFILDISPVAHRVAL). At 235–243 (CHLAGCQEQ) the chain is on the cytoplasmic side. Residues 244-264 (AAWYHTLQILFFLVSAYFFSC) form a helical membrane-spanning segment. At 265 to 283 (PVPEKYFPGSCDIVGHGHQ) the chain is on the extracellular side. A helical transmembrane segment spans residues 284 to 304 (IFHAFLSICTLSQLEAILLDY). At 305–319 (QGRQEIFLQRHGPLS) the chain is on the cytoplasmic side. Residues 320 to 340 (VHMACLSFFFLAACSAATAAL) traverse the membrane as a helical segment. At 341–354 (LRHKVKARLTKKDS) the chain is on the extracellular side.

It belongs to the ADIPOR family. Highly expressed in the hypothalamus. Also expressed in spinal cord, kidney and testis.

Its subcellular location is the cell membrane. Functionally, plasma membrane progesterone (P4) receptor coupled to G proteins. Seems to act through a G(i) mediated pathway. May be involved in oocyte maturation. Also binds dehydroepiandrosterone (DHEA), pregnanolone, pregnenolone and allopregnanolone. The polypeptide is Membrane progestin receptor beta (Homo sapiens (Human)).